We begin with the raw amino-acid sequence, 59 residues long: Large ribosomal subunit protein uL30 (59 aa).

It belongs to the universal ribosomal protein uL30 family. As to quaternary structure, part of the 50S ribosomal subunit.

This chain is Large ribosomal subunit protein uL30, found in Bacillus subtilis (strain 168).